The following is a 123-amino-acid chain: UPF0102 protein CLK_1817 (123 aa).

It belongs to the UPF0102 family.

The protein is UPF0102 protein CLK_1817 of Clostridium botulinum (strain Loch Maree / Type A3).